The primary structure comprises 265 residues: Type III pantothenate kinase (265 aa).

ATP is bound at residue 6–13; it reads DVGNTNIV. Position 112–115 (112–115) interacts with substrate; that stretch reads GADR. D114 functions as the Proton acceptor in the catalytic mechanism. A K(+)-binding site is contributed by D134. ATP is bound at residue T137. Substrate is bound at residue T189.

Belongs to the type III pantothenate kinase family. As to quaternary structure, homodimer. NH4(+) serves as cofactor. Requires K(+) as cofactor.

It is found in the cytoplasm. The catalysed reaction is (R)-pantothenate + ATP = (R)-4'-phosphopantothenate + ADP + H(+). It participates in cofactor biosynthesis; coenzyme A biosynthesis; CoA from (R)-pantothenate: step 1/5. Its function is as follows. Catalyzes the phosphorylation of pantothenate (Pan), the first step in CoA biosynthesis. This is Type III pantothenate kinase from Saccharopolyspora erythraea (strain ATCC 11635 / DSM 40517 / JCM 4748 / NBRC 13426 / NCIMB 8594 / NRRL 2338).